An 863-amino-acid polypeptide reads, in one-letter code: Probable beta-glucosidase A (863 aa).

A signal peptide spans 1–19 (MKLGWLEAAALTAASVASA). Asn65, Asn214, and Asn255 each carry an N-linked (GlcNAc...) asparagine glycan. Residue Asp283 is part of the active site. N-linked (GlcNAc...) asparagine glycosylation is found at Asn318, Asn325, Asn357, Asn493, Asn526, Asn545, Asn567, Asn664, and Asn715. The disordered stretch occupies residues 720 to 754 (KESSGDPNYGWDDEDYIPEGAKDGSPQDVLPSGGG).

This sequence belongs to the glycosyl hydrolase 3 family.

The protein localises to the secreted. The enzyme catalyses Hydrolysis of terminal, non-reducing beta-D-glucosyl residues with release of beta-D-glucose.. It participates in glycan metabolism; cellulose degradation. In terms of biological role, beta-glucosidases are one of a number of cellulolytic enzymes involved in the degradation of cellulosic biomass. Catalyzes the last step releasing glucose from the inhibitory cellobiose. This chain is Probable beta-glucosidase A (bglA), found in Emericella nidulans (strain FGSC A4 / ATCC 38163 / CBS 112.46 / NRRL 194 / M139) (Aspergillus nidulans).